The following is a 180-amino-acid chain: Cytidylate kinase (180 aa).

7-15 contacts ATP; it reads GLPGSGTTT.

This sequence belongs to the cytidylate kinase family. Type 2 subfamily.

It localises to the cytoplasm. It carries out the reaction CMP + ATP = CDP + ADP. The enzyme catalyses dCMP + ATP = dCDP + ADP. This is Cytidylate kinase from Methanosarcina barkeri (strain Fusaro / DSM 804).